The sequence spans 1728 residues: Hybrid PKS-NRPS synthetase TAS1 (1728 aa).

Residues 153 to 499 (SPLSKAQMAL…MDPTLLDFKV (347 aa)) form a condensation (C) domain region. Residues 608–1002 (KARAASQPDL…KLHIQGRIGN (395 aa)) are adenylation (A) domain. The region spanning 1141–1219 (MLRRHLTAEV…KQVDCLMGIV (79 aa)) is the Carrier domain. Serine 1177 carries the O-(pantetheine 4'-phosphoryl)serine modification. The interval 1225-1256 (LGSEPTGGSSSRSQSRRSAETSSSSTSAPSSV) is disordered. Composition is skewed to low complexity over residues 1226–1237 (GSEPTGGSSSRS) and 1244–1255 (ETSSSSTSAPSS). Residues 1262-1714 (RNLYAIVGIS…SDATWFVIST (453 aa)) form the Ketosynthase family 3 (KS3) domain. Residues cysteine 1436, histidine 1579, and asparagine 1633 each act as for beta-ketoacyl synthase activity in the active site.

This sequence in the N-terminal section; belongs to the NRP synthetase family. Pantetheine 4'-phosphate serves as cofactor.

It carries out the reaction acetoacetyl-CoA + L-isoleucine + ATP = tenuazonic acid + AMP + diphosphate + CoA + 2 H(+). In terms of biological role, hybrid PKS-NRPS synthetase that mediates the biosynthesis of the toxin tenuazonic acid (TeA), an inhibitor of protein biosynthesis on ribosomes by suppressing the release of new protein. TAS1 alone is sufficient for TeA synthesis via the condensation of isoleucine (Ile) with acetoacetyl-CoA by the N-terminal NRPS module and subsequent cyclization conducted by the C-terminal KS domain. The protein is Hybrid PKS-NRPS synthetase TAS1 of Pyricularia oryzae (strain 70-15 / ATCC MYA-4617 / FGSC 8958) (Rice blast fungus).